The primary structure comprises 541 residues: Glutamyl-tRNA(Gln) amidotransferase subunit B, mitochondrial (541 aa).

The protein belongs to the GatB/GatE family. GatB subfamily. As to quaternary structure, subunit of the heterotrimeric GatFAB amidotransferase (AdT) complex, composed of A (HER2), B (PET112) and F (YGR102C) subunits.

It is found in the mitochondrion. It carries out the reaction L-glutamyl-tRNA(Gln) + L-glutamine + ATP + H2O = L-glutaminyl-tRNA(Gln) + L-glutamate + ADP + phosphate + H(+). Its function is as follows. Allows the formation of correctly charged Gln-tRNA(Gln) through the transamidation of misacylated Glu-tRNA(Gln) in the mitochondria. The reaction takes place in the presence of glutamine and ATP through an activated gamma-phospho-Glu-tRNA(Gln). The polypeptide is Glutamyl-tRNA(Gln) amidotransferase subunit B, mitochondrial (Saccharomyces cerevisiae (strain ATCC 204508 / S288c) (Baker's yeast)).